The sequence spans 247 residues: Agamous-like MADS-box protein AGL28 (247 aa).

One can recognise an MADS-box domain in the interval 6–66 (LGRRKIELVK…GKAYSFGHPN (61 aa)). The stretch at 91 to 168 (TKLRIQMLNE…VDEKVAQLHH (78 aa)) forms a coiled coil.

As to expression, expressed in roots, leaves and shoot apices.

It is found in the nucleus. Functionally, probable transcription factor that may function as a floral promoter operating upstream of known floral activators in the autonomous pathway. The sequence is that of Agamous-like MADS-box protein AGL28 from Arabidopsis thaliana (Mouse-ear cress).